Consider the following 147-residue polypeptide: 3-dehydroquinate dehydratase (147 aa).

The Proton acceptor role is filled by Y24. Positions 73, 79, and 86 each coordinate substrate. The active-site Proton donor is the H99. Residues 100 to 101 (LS) and R110 each bind substrate.

The protein belongs to the type-II 3-dehydroquinase family. Homododecamer.

It catalyses the reaction 3-dehydroquinate = 3-dehydroshikimate + H2O. It functions in the pathway metabolic intermediate biosynthesis; chorismate biosynthesis; chorismate from D-erythrose 4-phosphate and phosphoenolpyruvate: step 3/7. Functionally, catalyzes a trans-dehydration via an enolate intermediate. This is 3-dehydroquinate dehydratase from Hyphomonas neptunium (strain ATCC 15444).